Reading from the N-terminus, the 137-residue chain is Endoribonuclease YbeY (137 aa).

Zn(2+) is bound by residues H105, H109, and D115.

This sequence belongs to the endoribonuclease YbeY family. The cofactor is Zn(2+).

Its subcellular location is the cytoplasm. Single strand-specific metallo-endoribonuclease involved in late-stage 70S ribosome quality control and in maturation of the 3' terminus of the 16S rRNA. This is Endoribonuclease YbeY from Chlorobium luteolum (strain DSM 273 / BCRC 81028 / 2530) (Pelodictyon luteolum).